We begin with the raw amino-acid sequence, 76 residues long: MGIQGLYQKRFCLFVCLERFQWRGAIFLVCYPLYCVVCFVSVLCRLYCILMSAASATQTICDQSILHVHGVENMKA.

Residues 24-44 (GAIFLVCYPLYCVVCFVSVLC) traverse the membrane as a helical segment.

Its subcellular location is the membrane. This is an uncharacterized protein from Schizosaccharomyces pombe (strain 972 / ATCC 24843) (Fission yeast).